A 239-amino-acid polypeptide reads, in one-letter code: Proteasome subunit beta type-6 (239 aa).

Ala-2 carries the post-translational modification N-acetylalanine. Positions 2 to 34 (AATLLAARGAGPAPAWGPEAFTPDWESREVSTG) are cleaved as a propeptide — removed in mature form. The active-site Nucleophile is the Thr-35. A Phosphothreonine modification is found at Thr-69.

The protein belongs to the peptidase T1B family. The 26S proteasome consists of a 20S proteasome core and two 19S regulatory subunits. The 20S proteasome core is a barrel-shaped complex made of 28 subunits that are arranged in four stacked rings. The two outer rings are each formed by seven alpha subunits, and the two inner rings are formed by seven beta subunits. The proteolytic activity is exerted by three beta-subunits PSMB5, PSMB6 and PSMB7. As to quaternary structure, (Microbial infection) Interacts with HIV-1 protein Tat.

It is found in the cytoplasm. The protein resides in the nucleus. The catalysed reaction is Cleavage of peptide bonds with very broad specificity.. Its function is as follows. Component of the 20S core proteasome complex involved in the proteolytic degradation of most intracellular proteins. This complex plays numerous essential roles within the cell by associating with different regulatory particles. Associated with two 19S regulatory particles, forms the 26S proteasome and thus participates in the ATP-dependent degradation of ubiquitinated proteins. The 26S proteasome plays a key role in the maintenance of protein homeostasis by removing misfolded or damaged proteins that could impair cellular functions, and by removing proteins whose functions are no longer required. Associated with the PA200 or PA28, the 20S proteasome mediates ubiquitin-independent protein degradation. This type of proteolysis is required in several pathways including spermatogenesis (20S-PA200 complex) or generation of a subset of MHC class I-presented antigenic peptides (20S-PA28 complex). Within the 20S core complex, PSMB6 displays a peptidylglutamyl-hydrolizing activity also termed postacidic or caspase-like activity, meaning that the peptides bond hydrolysis occurs directly after acidic residues. This Homo sapiens (Human) protein is Proteasome subunit beta type-6.